The primary structure comprises 363 residues: UDP-N-acetylglucosamine--N-acetylmuramyl-(pentapeptide) pyrophosphoryl-undecaprenol N-acetylglucosamine transferase (363 aa).

Residues 10–12, asparagine 124, serine 195, isoleucine 250, and glutamine 295 each bind UDP-N-acetyl-alpha-D-glucosamine; that span reads TGG.

This sequence belongs to the glycosyltransferase 28 family. MurG subfamily.

The protein resides in the cell membrane. It catalyses the reaction di-trans,octa-cis-undecaprenyl diphospho-N-acetyl-alpha-D-muramoyl-L-alanyl-D-glutamyl-meso-2,6-diaminopimeloyl-D-alanyl-D-alanine + UDP-N-acetyl-alpha-D-glucosamine = di-trans,octa-cis-undecaprenyl diphospho-[N-acetyl-alpha-D-glucosaminyl-(1-&gt;4)]-N-acetyl-alpha-D-muramoyl-L-alanyl-D-glutamyl-meso-2,6-diaminopimeloyl-D-alanyl-D-alanine + UDP + H(+). It functions in the pathway cell wall biogenesis; peptidoglycan biosynthesis. Its function is as follows. Cell wall formation. Catalyzes the transfer of a GlcNAc subunit on undecaprenyl-pyrophosphoryl-MurNAc-pentapeptide (lipid intermediate I) to form undecaprenyl-pyrophosphoryl-MurNAc-(pentapeptide)GlcNAc (lipid intermediate II). The sequence is that of UDP-N-acetylglucosamine--N-acetylmuramyl-(pentapeptide) pyrophosphoryl-undecaprenol N-acetylglucosamine transferase from Listeria monocytogenes serotype 4a (strain HCC23).